Reading from the N-terminus, the 426-residue chain is Citrate transporter (426 aa).

A run of 12 helical transmembrane segments spans residues 1 to 21 (MLAI…MSNR), 22 to 42 (LSAL…SGFG), 59 to 79 (TGIM…SGLF), 86 to 106 (ILSF…VLTM), 137 to 157 (LVLA…PWGG), 176 to 196 (PLIP…YILG), 232 to 252 (LLTV…PVLF), 278 to 298 (AGNA…TGIL), 318 to 338 (AMGP…TFFM), 343 to 363 (FYFG…IDAA), 377 to 397 (LLSP…VSFG), and 406 to 426 (WAVG…IISF).

Belongs to the CitM (TC 2.A.11) transporter family.

It is found in the cell membrane. In terms of biological role, transports the free citrate anion. Probably cotransports citrate and at least three or four protons. The citrate uptake is inhibited by the presence of magnesium ions. The chain is Citrate transporter (citN) from Bacillus subtilis (strain 168).